The following is a 442-amino-acid chain: Armadillo-like helical domain containing protein 1 (442 aa).

In Bos taurus (Bovine), this protein is Armadillo-like helical domain containing protein 1.